We begin with the raw amino-acid sequence, 873 residues long: Leucine--tRNA ligase (873 aa).

A 'HIGH' region motif is present at residues 42–52 (PYPSGKLHMGH). Positions 624-643 (PVEIGGTEKMSKSKNNGVDP) are disordered. The 'KMSKS' region motif lies at 632 to 636 (KMSKS). Lys-635 serves as a coordination point for ATP.

Belongs to the class-I aminoacyl-tRNA synthetase family.

It localises to the cytoplasm. It catalyses the reaction tRNA(Leu) + L-leucine + ATP = L-leucyl-tRNA(Leu) + AMP + diphosphate. In Pseudomonas paraeruginosa (strain DSM 24068 / PA7) (Pseudomonas aeruginosa (strain PA7)), this protein is Leucine--tRNA ligase.